The primary structure comprises 230 residues: Poxin (230 aa).

His-43 serves as the catalytic Proton donor. The active-site Shared with catalytic histidine of dimeric partner is the Tyr-174. Lys-178 serves as the catalytic Proton acceptor; shared with catalytic histidine of dimeric partner.

This sequence belongs to the poxin family. As to quaternary structure, homodimer.

The catalysed reaction is 2',3'-cGAMP + H2O = Gp(2'-5')Ap(3') + H(+). In terms of biological role, nuclease that cleaves host 2',3'-cGAMP. The chain is Poxin (P26) from Orgyia pseudotsugata multicapsid polyhedrosis virus (OpMNPV).